A 293-amino-acid polypeptide reads, in one-letter code: Cyclohexadienyl dehydrogenase (293 aa).

Residues lysine 5–proline 293 enclose the Prephenate/arogenate dehydrogenase domain. Histidine 6 to valine 30 contacts NAD(+).

It belongs to the prephenate/arogenate dehydrogenase family. In terms of assembly, homodimer.

The enzyme catalyses L-arogenate + NAD(+) = L-tyrosine + CO2 + NADH. It carries out the reaction prephenate + NAD(+) = 3-(4-hydroxyphenyl)pyruvate + CO2 + NADH. Its pathway is amino-acid biosynthesis; L-tyrosine biosynthesis; (4-hydroxyphenyl)pyruvate from prephenate (NAD(+) route): step 1/1. It functions in the pathway amino-acid biosynthesis; L-tyrosine biosynthesis; L-tyrosine from L-arogenate (NAD(+) route): step 1/1. With respect to regulation, insensitive to feedback inhibition by L-tyrosine. Can function as either prephenate dehydrogenase or as arogenate dehydrogenase in the biosynthesis of L-tyrosine. Catalyzes two analogous reactions: converts prephenate to 4-hydroxyphenylpyruvate and transforms L-arogenate to L-tyrosine. Is not able to utilize NADP(+) instead of NAD(+) as cosubstrate. In Zymomonas mobilis subsp. mobilis (strain ATCC 31821 / ZM4 / CP4), this protein is Cyclohexadienyl dehydrogenase.